The sequence spans 391 residues: Phosphoglycerate kinase (391 aa).

Substrate-binding positions include 21–23 (DLN), R36, 59–62 (HLGR), R113, and R146. Residues K197, E319, and 345–348 (GGDT) each bind ATP.

This sequence belongs to the phosphoglycerate kinase family. Monomer.

It localises to the cytoplasm. It carries out the reaction (2R)-3-phosphoglycerate + ATP = (2R)-3-phospho-glyceroyl phosphate + ADP. Its pathway is carbohydrate degradation; glycolysis; pyruvate from D-glyceraldehyde 3-phosphate: step 2/5. This Shewanella frigidimarina (strain NCIMB 400) protein is Phosphoglycerate kinase.